Here is a 214-residue protein sequence, read N- to C-terminus: MKFFIDTANVDEIKKAWEVGVIDGVTTNPSLLAKEGKEPVSLLKEICQIVDGPVSAEAVSLKYEDMLKESIELSKIHSNIVIKIPMTEDGLKTVRKLSQEGIKTNVTLVFSPTQALLAAKAGATYVSPFVGRLDDISHFGMELVRDIQIIFENYGFDTEVIVASIRNPLHVLEAARIGADIATIPYSVIKQLIKHPLTDIGIERFLKDWEKLKK.

Lys-83 (schiff-base intermediate with substrate) is an active-site residue.

The protein belongs to the transaldolase family. Type 3B subfamily.

It localises to the cytoplasm. It carries out the reaction D-sedoheptulose 7-phosphate + D-glyceraldehyde 3-phosphate = D-erythrose 4-phosphate + beta-D-fructose 6-phosphate. Its pathway is carbohydrate degradation; pentose phosphate pathway; D-glyceraldehyde 3-phosphate and beta-D-fructose 6-phosphate from D-ribose 5-phosphate and D-xylulose 5-phosphate (non-oxidative stage): step 2/3. Transaldolase is important for the balance of metabolites in the pentose-phosphate pathway. The sequence is that of Probable transaldolase from Thermodesulfovibrio yellowstonii (strain ATCC 51303 / DSM 11347 / YP87).